The following is a 556-amino-acid chain: Formate--tetrahydrofolate ligase (556 aa).

65-72 lines the ATP pocket; that stretch reads TPAGEGKS.

Belongs to the formate--tetrahydrofolate ligase family.

The catalysed reaction is (6S)-5,6,7,8-tetrahydrofolate + formate + ATP = (6R)-10-formyltetrahydrofolate + ADP + phosphate. Its pathway is one-carbon metabolism; tetrahydrofolate interconversion. The protein is Formate--tetrahydrofolate ligase of Clostridium beijerinckii (strain ATCC 51743 / NCIMB 8052) (Clostridium acetobutylicum).